The primary structure comprises 381 residues: GDSL esterase/lipase At3g48460 (381 aa).

A signal peptide spans 1 to 26 (MSSSISPLLTTAISVAILLFSTISTA). Ser45 (nucleophile) is an active-site residue. Asn112, Asn140, and Asn258 each carry an N-linked (GlcNAc...) asparagine glycan. Catalysis depends on residues Asp344 and His347.

This sequence belongs to the 'GDSL' lipolytic enzyme family.

The protein resides in the secreted. The sequence is that of GDSL esterase/lipase At3g48460 from Arabidopsis thaliana (Mouse-ear cress).